The sequence spans 284 residues: Undecaprenyl-diphosphatase (284 aa).

A run of 8 helical transmembrane segments spans residues 1–21 (MNWLHAIILGIVEGITEFLPV), 43–63 (ITAFTAIIQVGAIIAAILYFW), 88–108 (YTLGWGIILGSIPVGVVGLVF), 116–136 (LSSLWVVAIALILWSGVMWLG), 149–169 (IGIVDAIVIGCFQALAPLFPG), 193–213 (LSFFMGIPALVAAGIYESVSA), 225–245 (VAIGWGPTILATVVSLIVAYV), and 259–279 (FTGFMWYRVVVGLIIIGLILS).

Belongs to the UppP family.

The protein resides in the cell membrane. The catalysed reaction is di-trans,octa-cis-undecaprenyl diphosphate + H2O = di-trans,octa-cis-undecaprenyl phosphate + phosphate + H(+). Functionally, catalyzes the dephosphorylation of undecaprenyl diphosphate (UPP). Confers resistance to bacitracin. This chain is Undecaprenyl-diphosphatase, found in Cutibacterium acnes (strain DSM 16379 / KPA171202) (Propionibacterium acnes).